An 843-amino-acid polypeptide reads, in one-letter code: Neuroligin-1 (843 aa).

An N-terminal signal peptide occupies residues 1–45 (MALPRCMWPNYVWRAMMACVVHRGSGAPLTLCLLGCLLQTFHVLS). Residues 46-697 (QKLDDVDPLV…DQRDYSTELS (652 aa)) lie on the Extracellular side of the membrane. The N-linked (GlcNAc...) (complex) asparagine glycan is linked to N109. 2 disulfides stabilise this stretch: C117-C153 and C172-C181. N-linked (GlcNAc...) (complex) asparagine glycans are attached at residues N303 and N343. 2 disulfides stabilise this stretch: C342–C353 and C512–C546. An N-linked (GlcNAc...) asparagine glycan is attached at N547. The disordered stretch occupies residues 647 to 688 (TKVPSTDITLRPTRKNSTPVTSAFPTAKQDDPKQQPSPFSVD). The segment covering 661 to 670 (KNSTPVTSAF) has biased composition (polar residues). O-linked (GalNAc...) serine glycosylation is found at S683 and S686. Residues 698-718 (VTIAVGASLLFLNILAFAALY) form a helical membrane-spanning segment. The Cytoplasmic portion of the chain corresponds to 719–843 (YKKDKRRHDV…HPHSHSTTRV (125 aa)). Residues 822-843 (GGQNNTLPHPHPHPHSHSTTRV) are disordered. Positions 831–843 (PHPHPHSHSTTRV) are enriched in basic residues.

This sequence belongs to the type-B carboxylesterase/lipase family. In terms of assembly, interacts with neurexins NRXN1, NRXN2 and NRXN3. Interaction with neurexins is mediated by heparan sulfate glycan modification on neurexin. Interacts with NLGN3. Interacts (via its C-terminus) with DLG4/PSD-95 (via PDZ domain 3). Interacts with GOPC. Interacts with AIP1 and PDZRN3. Post-translationally, the N-terminus is blocked. Expressed in brain, almost exclusively in neurons, and spinal cord. Detected in pancreas islet beta cells.

It localises to the cell membrane. Its subcellular location is the postsynaptic density. The protein localises to the synaptic cleft. It is found in the synaptic cell membrane. Its function is as follows. Cell surface protein involved in cell-cell-interactions via its interactions with neurexin family members. Plays a role in synapse function and synaptic signal transmission, and probably mediates its effects by recruiting and clustering other synaptic proteins. May promote the initial formation of synapses, but is not essential for this. In vitro, triggers the de novo formation of presynaptic structures. May be involved in specification of excitatory synapses. Required to maintain wakefulness quality and normal synchrony of cerebral cortex activity during wakefulness and sleep. The protein is involved in nervous system development. This Rattus norvegicus (Rat) protein is Neuroligin-1 (Nlgn1).